The sequence spans 281 residues: Urease accessory protein UreD 2 (281 aa).

The protein belongs to the UreD family. UreD, UreF and UreG form a complex that acts as a GTP-hydrolysis-dependent molecular chaperone, activating the urease apoprotein by helping to assemble the nickel containing metallocenter of UreC. The UreE protein probably delivers the nickel.

It is found in the cytoplasm. Its function is as follows. Required for maturation of urease via the functional incorporation of the urease nickel metallocenter. The sequence is that of Urease accessory protein UreD 2 from Pseudomonas syringae pv. syringae (strain B728a).